The chain runs to 121 residues: Large ribosomal subunit protein uL22 (121 aa).

Belongs to the universal ribosomal protein uL22 family. Part of the 50S ribosomal subunit.

Its function is as follows. This protein binds specifically to 23S rRNA; its binding is stimulated by other ribosomal proteins, e.g. L4, L17, and L20. It is important during the early stages of 50S assembly. It makes multiple contacts with different domains of the 23S rRNA in the assembled 50S subunit and ribosome. The globular domain of the protein is located near the polypeptide exit tunnel on the outside of the subunit, while an extended beta-hairpin is found that lines the wall of the exit tunnel in the center of the 70S ribosome. The polypeptide is Large ribosomal subunit protein uL22 (Beutenbergia cavernae (strain ATCC BAA-8 / DSM 12333 / CCUG 43141 / JCM 11478 / NBRC 16432 / NCIMB 13614 / HKI 0122)).